The following is a 339-amino-acid chain: 4-hydroxy-2-oxovalerate aldolase (339 aa).

The 253-residue stretch at 8–260 (IILHDMCLRD…STDVDVFKLM (253 aa)) folds into the Pyruvate carboxyltransferase domain. 16-17 (RD) is a substrate binding site. D17 is a Mn(2+) binding site. H20 serves as the catalytic Proton acceptor. S170 and H199 together coordinate substrate. Positions 199 and 201 each coordinate Mn(2+). Y290 is a binding site for substrate.

This sequence belongs to the 4-hydroxy-2-oxovalerate aldolase family.

It carries out the reaction (S)-4-hydroxy-2-oxopentanoate = acetaldehyde + pyruvate. The polypeptide is 4-hydroxy-2-oxovalerate aldolase (Shewanella woodyi (strain ATCC 51908 / MS32)).